A 469-amino-acid chain; its full sequence is Glutamate--tRNA ligase (469 aa).

The 'HIGH' region signature appears at 10 to 20 (PSPTGYLHVGG). 4 residues coordinate Zn(2+): Cys99, Cys101, Cys126, and Asp128. The 'KMSKS' region motif lies at 238 to 242 (RLSKR). Lys241 lines the ATP pocket.

It belongs to the class-I aminoacyl-tRNA synthetase family. Glutamate--tRNA ligase type 1 subfamily. In terms of assembly, monomer. Zn(2+) is required as a cofactor.

The protein resides in the cytoplasm. The enzyme catalyses tRNA(Glu) + L-glutamate + ATP = L-glutamyl-tRNA(Glu) + AMP + diphosphate. In terms of biological role, catalyzes the attachment of glutamate to tRNA(Glu) in a two-step reaction: glutamate is first activated by ATP to form Glu-AMP and then transferred to the acceptor end of tRNA(Glu). The polypeptide is Glutamate--tRNA ligase (Pelobacter propionicus (strain DSM 2379 / NBRC 103807 / OttBd1)).